The following is an 82-amino-acid chain: uncharacterized protein (82 aa).

Positions 22 to 82 are disordered; sequence LRRSRSSRNG…WPPPCAFTPG (61 aa). Residues 47–58 show a composition bias toward basic and acidic residues; sequence HRGEPGHPRMEE. Positions 73 to 82 are enriched in pro residues; sequence WPPPCAFTPG.

This is an uncharacterized protein from Homo sapiens (Human).